The primary structure comprises 175 residues: MKLCLVAFDGRIPMLSSIVDRFEEHVSEYLGEVKVKKKRAKLPEHAYSKVRGQYLARALLDTLRGMKGEYDRVLGLTSEDLYAPGLNFVFGQARCPGREAVVSVARLLDPDPELYLERVVKELTHELGHTFGLGHCPDRNCVMSFSSSLLEVDRKSPNFCRRCTELLQRNLKRGG.

Zn(2+) is bound at residue His125. The Proton acceptor role is filled by Glu126. His129, His135, Cys136, Cys141, Cys160, and Cys163 together coordinate Zn(2+).

It belongs to the peptidase M54 family. In terms of assembly, monomer. Zn(2+) serves as cofactor.

Its function is as follows. Probable zinc metalloprotease whose natural substrate is unknown. Does not show endo- or exopeptidase activity against resorufin labeled casein, p-nitroanilide (pNA), amidomethylcoumarin (AMC) (one to three amino acids in length), and hippuryl-aminoacid substrates. This chain is Archaemetzincin, found in Methanopyrus kandleri (strain AV19 / DSM 6324 / JCM 9639 / NBRC 100938).